A 568-amino-acid chain; its full sequence is Acetate--CoA ligase CCL3 (568 aa).

ATP contacts are provided by residues 204-212 (TSGTTASPK), 340-345 (HTYGLS), Asp437, 449-452 (IKDR), and Lys547. The interval 272–340 (TAKGVYSAIA…MSEKGFKVAH (69 aa)) is SBD1. Positions 341–417 (TYGLSETYGP…MRGNAVMKGY (77 aa)) are SBD2.

The protein belongs to the ATP-dependent AMP-binding enzyme family. In terms of tissue distribution, mostly expressed in glandular trichomes (lupulin glands) after flowering and in old leaves, and, to a lower extent, in stems, young leaves, cones and flowers.

It localises to the cytoplasm. Its subcellular location is the cytosol. It catalyses the reaction acetate + ATP + CoA = acetyl-CoA + AMP + diphosphate. The enzyme catalyses propanoate + ATP + CoA = propanoyl-CoA + AMP + diphosphate. The catalysed reaction is butanoate + ATP + CoA = butanoyl-CoA + AMP + diphosphate. It carries out the reaction 3-methylbutanoate + ATP + CoA = 3-methylbutanoyl-CoA + AMP + diphosphate. It catalyses the reaction pentanoate + ATP + CoA = pentanoyl-CoA + AMP + diphosphate. The enzyme catalyses hexanoate + ATP + CoA = hexanoyl-CoA + AMP + diphosphate. The catalysed reaction is 2-methylpropanoate + ATP + CoA = 2-methylpropanoyl-CoA + AMP + diphosphate. It carries out the reaction 2-methylbutanoate + ATP + CoA = 2-methylbutanoyl-CoA + AMP + diphosphate. It catalyses the reaction 2-methylpentanoate + ATP + CoA = 2-methylpentanoyl-CoA + AMP + diphosphate. The enzyme catalyses 3-methylpentanoate + ATP + CoA = 3-methylpentanoyl-CoA + AMP + diphosphate. The catalysed reaction is 4-methylpentanoate + ATP + CoA = 4-methylpentanoyl-CoA + AMP + diphosphate. Its pathway is secondary metabolite biosynthesis. Its function is as follows. Involved in the biosynthesis of prenylated phenolics natural products which contribute to the bitter taste of beer and display broad biological activities. Catalyzes the ligation of CoA on propanoate to produce propanoyl-CoA. Can also use 2-methylpropanoate (isobutyric acid), acetate, butanoate, isovalerate, pentanoate, hexanoate, 2-methylbutanoate, 2-methylpentanoate, 3-methylpentanoate and 4-methylpentanoate as substrates with a lower efficiency. Triggers the formation of very short chain acyl-CoAs from the corresponding fatty acids, including acetic acid, propanoic acid, butyric acid and its isomer. The protein is Acetate--CoA ligase CCL3 of Humulus lupulus (European hop).